The sequence spans 75 residues: Sec-independent protein translocase protein TatA (75 aa).

The chain crosses the membrane as a helical span at residues 1–21; the sequence is MGSFSIWHWLVVLAIVLLVFG. A disordered region spans residues 40–75; sequence KKGMRDEDKPNAQLGDESRSQDASRTAQDEHDRTPR.

Belongs to the TatA/E family. In terms of assembly, the Tat system comprises two distinct complexes: a TatABC complex, containing multiple copies of TatA, TatB and TatC subunits, and a separate TatA complex, containing only TatA subunits. Substrates initially bind to the TatABC complex, which probably triggers association of the separate TatA complex to form the active translocon.

It localises to the cell inner membrane. Part of the twin-arginine translocation (Tat) system that transports large folded proteins containing a characteristic twin-arginine motif in their signal peptide across membranes. TatA could form the protein-conducting channel of the Tat system. The polypeptide is Sec-independent protein translocase protein TatA (Stenotrophomonas maltophilia (strain R551-3)).